The sequence spans 465 residues: Glutamate--tRNA ligase 1 (465 aa).

A 'HIGH' region motif is present at residues 8 to 18 (PSPTGNLHIGG). Positions 236 to 240 (KLSKR) match the 'KMSKS' region motif. ATP is bound at residue K239.

The protein belongs to the class-I aminoacyl-tRNA synthetase family. Glutamate--tRNA ligase type 1 subfamily. As to quaternary structure, monomer.

It is found in the cytoplasm. It catalyses the reaction tRNA(Glu) + L-glutamate + ATP = L-glutamyl-tRNA(Glu) + AMP + diphosphate. Catalyzes the attachment of glutamate to tRNA(Glu) in a two-step reaction: glutamate is first activated by ATP to form Glu-AMP and then transferred to the acceptor end of tRNA(Glu). The protein is Glutamate--tRNA ligase 1 of Wolinella succinogenes (strain ATCC 29543 / DSM 1740 / CCUG 13145 / JCM 31913 / LMG 7466 / NCTC 11488 / FDC 602W) (Vibrio succinogenes).